Reading from the N-terminus, the 743-residue chain is Alpha-N-acetylglucosaminidase (743 aa).

The first 23 residues, 1–23 (MEAVAVAAAVGVLLLAGAGGAAG), serve as a signal peptide directing secretion. N-linked (GlcNAc...) asparagine glycans are attached at residues N261, N272, N435, N503, N526, and N532.

This sequence belongs to the glycosyl hydrolase 89 family. Monomer and homodimer. In terms of tissue distribution, liver, ovary, peripheral blood leukocytes, testis, prostate, spleen, colon, lung, placenta and kidney.

Its subcellular location is the lysosome. The enzyme catalyses Hydrolysis of terminal non-reducing N-acetyl-D-glucosamine residues in N-acetyl-alpha-D-glucosaminides.. Its function is as follows. Involved in the degradation of heparan sulfate. The polypeptide is Alpha-N-acetylglucosaminidase (NAGLU) (Homo sapiens (Human)).